The following is a 517-amino-acid chain: Crotonobetaine/carnitine--CoA ligase (517 aa).

Belongs to the ATP-dependent AMP-binding enzyme family.

It catalyses the reaction 4-(trimethylamino)butanoate + ATP + CoA = 4-(trimethylamino)butanoyl-CoA + AMP + diphosphate. The catalysed reaction is crotonobetaine + ATP + CoA = crotonobetainyl-CoA + AMP + diphosphate. It carries out the reaction (R)-carnitine + ATP + CoA = (R)-carnitinyl-CoA + AMP + diphosphate. It participates in amine and polyamine metabolism; carnitine metabolism. In terms of biological role, catalyzes the transfer of CoA to carnitine, generating the initial carnitinyl-CoA needed for the CaiB reaction cycle. Also has activity toward crotonobetaine and gamma-butyrobetaine. The chain is Crotonobetaine/carnitine--CoA ligase from Escherichia coli O7:K1 (strain IAI39 / ExPEC).